The sequence spans 446 residues: Exodeoxyribonuclease 7 large subunit (446 aa).

It belongs to the XseA family. In terms of assembly, heterooligomer composed of large and small subunits.

Its subcellular location is the cytoplasm. It carries out the reaction Exonucleolytic cleavage in either 5'- to 3'- or 3'- to 5'-direction to yield nucleoside 5'-phosphates.. Bidirectionally degrades single-stranded DNA into large acid-insoluble oligonucleotides, which are then degraded further into small acid-soluble oligonucleotides. This chain is Exodeoxyribonuclease 7 large subunit, found in Acholeplasma laidlawii (strain PG-8A).